Consider the following 341-residue polypeptide: Glycerol-3-phosphate dehydrogenase [NAD(P)+] (341 aa).

NADPH contacts are provided by serine 17, tryptophan 18, arginine 37, and lysine 112. 2 residues coordinate sn-glycerol 3-phosphate: lysine 112 and glycine 140. Alanine 144 contributes to the NADPH binding site. Sn-glycerol 3-phosphate is bound by residues lysine 195, aspartate 248, serine 258, arginine 259, and asparagine 260. The active-site Proton acceptor is lysine 195. NADPH is bound at residue arginine 259. Positions 283 and 285 each coordinate NADPH.

The protein belongs to the NAD-dependent glycerol-3-phosphate dehydrogenase family.

The protein localises to the cytoplasm. It catalyses the reaction sn-glycerol 3-phosphate + NAD(+) = dihydroxyacetone phosphate + NADH + H(+). The enzyme catalyses sn-glycerol 3-phosphate + NADP(+) = dihydroxyacetone phosphate + NADPH + H(+). The protein operates within membrane lipid metabolism; glycerophospholipid metabolism. Catalyzes the reduction of the glycolytic intermediate dihydroxyacetone phosphate (DHAP) to sn-glycerol 3-phosphate (G3P), the key precursor for phospholipid synthesis. The chain is Glycerol-3-phosphate dehydrogenase [NAD(P)+] from Mycobacterium avium (strain 104).